Here is a 310-residue protein sequence, read N- to C-terminus: Olfactory receptor 9Q1 (310 aa).

The Extracellular portion of the chain corresponds to 1 to 25 (MAEMNLTLVTEFLLIAFTEYPEWAL). The N-linked (GlcNAc...) asparagine glycan is linked to asparagine 5. A helical transmembrane segment spans residues 26-46 (PLFLLFLFMYLITVLGNLEMI). The Cytoplasmic segment spans residues 47–54 (ILILMDHQ). A helical membrane pass occupies residues 55–75 (LHAPMYFLLSHLAFMDVCYSS). Residues 76–99 (ITVPQMLAVLLEHGAALSYTRCAA) lie on the Extracellular side of the membrane. Residues cysteine 97 and cysteine 189 are joined by a disulfide bond. Residues 100-120 (QFFLFTFFGSIDCYLLALMAY) traverse the membrane as a helical segment. Over 121 to 139 (DRYLAVCQPLLYVTILTQQ) the chain is Cytoplasmic. The chain crosses the membrane as a helical span at residues 140–160 (ARLSLVAGAYVAGLISALVRT). The Extracellular portion of the chain corresponds to 161–197 (VSAFTLSFCGTSEIDFIFCDLPPLLKLTCGESYTQEV). Residues 198–217 (LIIMFAIFVIPASMVVILVS) form a helical membrane-spanning segment. Topologically, residues 218–236 (YLFIIVAIMGIPAGSQAKT) are cytoplasmic. Residues 237 to 257 (FSTCTSHLTAVSLFFGTLIFM) form a helical membrane-spanning segment. Residues 258–270 (YLRGNSDQSSEKN) are Extracellular-facing. Residues 271 to 291 (RVVSVLYTEVIPMLNPLIYSL) form a helical membrane-spanning segment. Over 292-310 (RNKEVKEALRKILNRAKLS) the chain is Cytoplasmic.

The protein belongs to the G-protein coupled receptor 1 family.

The protein localises to the cell membrane. Functionally, odorant receptor. This is Olfactory receptor 9Q1 (OR9Q1) from Homo sapiens (Human).